The following is a 331-amino-acid chain: Ketol-acid reductoisomerase (NADP(+)) (331 aa).

Residues 2–182 form the KARI N-terminal Rossmann domain; the sequence is ARLYYDADAN…GGTRAGILET (181 aa). NADP(+) contacts are provided by residues 25 to 28, S51, S53, and 83 to 86; these read YGSQ and DEVQ. Residue H108 is part of the active site. G134 serves as a coordination point for NADP(+). Residues 183–328 enclose the KARI C-terminal knotted domain; it reads TFREETETDL…KDLRAMFSWT (146 aa). The Mg(2+) site is built by D191, E195, E227, and E231. Position 252 (S252) interacts with substrate.

It belongs to the ketol-acid reductoisomerase family. It depends on Mg(2+) as a cofactor.

It carries out the reaction (2R)-2,3-dihydroxy-3-methylbutanoate + NADP(+) = (2S)-2-acetolactate + NADPH + H(+). The enzyme catalyses (2R,3R)-2,3-dihydroxy-3-methylpentanoate + NADP(+) = (S)-2-ethyl-2-hydroxy-3-oxobutanoate + NADPH + H(+). It functions in the pathway amino-acid biosynthesis; L-isoleucine biosynthesis; L-isoleucine from 2-oxobutanoate: step 2/4. Its pathway is amino-acid biosynthesis; L-valine biosynthesis; L-valine from pyruvate: step 2/4. Its function is as follows. Involved in the biosynthesis of branched-chain amino acids (BCAA). Catalyzes an alkyl-migration followed by a ketol-acid reduction of (S)-2-acetolactate (S2AL) to yield (R)-2,3-dihydroxy-isovalerate. In the isomerase reaction, S2AL is rearranged via a Mg-dependent methyl migration to produce 3-hydroxy-3-methyl-2-ketobutyrate (HMKB). In the reductase reaction, this 2-ketoacid undergoes a metal-dependent reduction by NADPH to yield (R)-2,3-dihydroxy-isovalerate. This Acaryochloris marina (strain MBIC 11017) protein is Ketol-acid reductoisomerase (NADP(+)).